Consider the following 857-residue polypeptide: Inactive rhomboid protein 1 (857 aa).

The Cytoplasmic segment spans residues 1-413 (MAELRRDSTS…HRPFFTYWIT (413 aa)). Residues 283-307 (FESPSDSTMKDVDSKQLDESELTGS) are disordered. A compositionally biased stretch (basic and acidic residues) spans 290–300 (TMKDVDSKQLD). A helical transmembrane segment spans residues 414–434 (FVHILITILAVCIYGIAPVGF). Residues 435 to 661 (SQHETVDSVL…PDQFYRLWLS (227 aa)) lie on the Lumenal side of the membrane. An N-linked (GlcNAc...) asparagine glycan is attached at N585. A helical membrane pass occupies residues 662–682 (LFLHAGILHCLVSVCFQMTIL). Over 683 to 693 (RDLEKLAGWLR) the chain is Cytoplasmic. The chain crosses the membrane as a helical span at residues 694–714 (ISIIYILSGITGNLASAIFLP). Residues 715–716 (YR) lie on the Lumenal side of the membrane. The chain crosses the membrane as a helical span at residues 717 to 737 (AEVGPAGSQFGILACLFVELI). Residues 738–748 (QSWQILAQPWR) are Cytoplasmic-facing. Residues 749-769 (AFTKLLCVVLFLFAFGLLPWI) traverse the membrane as a helical segment. At 770–774 (DNFAH) the chain is on the lumenal side. A helical membrane pass occupies residues 775-795 (ISGFISGFFLSFAFLPYISFG). Over 796–805 (RLDMYRKRCQ) the chain is Cytoplasmic. Residues 806–826 (IIIFLVVFLGLFAGLVVLFYV) traverse the membrane as a helical segment. Residues 827–857 (HPIKCEWCELLTCIPFTDKFCEKYDLNAHLH) are Lumenal-facing.

It belongs to the peptidase S54 family.

It is found in the endoplasmic reticulum membrane. It localises to the golgi apparatus membrane. Regulates ADAM17 protease, a sheddase of the epidermal growth factor (EGF) receptor ligands and TNF, thereby plays a role in sleep, cell survival, proliferation, migration and inflammation. Does not exhibit any protease activity on its own. The protein is Inactive rhomboid protein 1 (rhbdf1) of Danio rerio (Zebrafish).